The chain runs to 404 residues: Cysteine desulfurase IscS (404 aa).

Pyridoxal 5'-phosphate contacts are provided by residues A75–T76, N155, Q183, and S203–H205. K206 carries the N6-(pyridoxal phosphate)lysine modification. T243 contributes to the pyridoxal 5'-phosphate binding site. Residue C328 is the Cysteine persulfide intermediate of the active site. C328 contacts [2Fe-2S] cluster.

This sequence belongs to the class-V pyridoxal-phosphate-dependent aminotransferase family. NifS/IscS subfamily. In terms of assembly, homodimer. Forms a heterotetramer with IscU, interacts with other sulfur acceptors. Requires pyridoxal 5'-phosphate as cofactor.

The protein localises to the cytoplasm. The catalysed reaction is (sulfur carrier)-H + L-cysteine = (sulfur carrier)-SH + L-alanine. Its pathway is cofactor biosynthesis; iron-sulfur cluster biosynthesis. Its function is as follows. Master enzyme that delivers sulfur to a number of partners involved in Fe-S cluster assembly, tRNA modification or cofactor biosynthesis. Catalyzes the removal of elemental sulfur atoms from cysteine to produce alanine. Functions as a sulfur delivery protein for Fe-S cluster synthesis onto IscU, an Fe-S scaffold assembly protein, as well as other S acceptor proteins. The protein is Cysteine desulfurase IscS of Pseudomonas putida (strain W619).